A 631-amino-acid polypeptide reads, in one-letter code: DNA mismatch repair protein MutL (631 aa).

Residues 389-423 (GEREASRQAGGQRVQETQMSSYGSGQSGGRGRSYA) are disordered.

It belongs to the DNA mismatch repair MutL/HexB family.

Functionally, this protein is involved in the repair of mismatches in DNA. It is required for dam-dependent methyl-directed DNA mismatch repair. May act as a 'molecular matchmaker', a protein that promotes the formation of a stable complex between two or more DNA-binding proteins in an ATP-dependent manner without itself being part of a final effector complex. The chain is DNA mismatch repair protein MutL from Shewanella loihica (strain ATCC BAA-1088 / PV-4).